The primary structure comprises 352 residues: Type II restriction enzyme HaeII (352 aa).

The catalysed reaction is Endonucleolytic cleavage of DNA to give specific double-stranded fragments with terminal 5'-phosphates.. Its function is as follows. A P subtype restriction enzyme that recognizes the double-stranded sequence 5'-RGCGCY-3' and cleaves after C-5. The chain is Type II restriction enzyme HaeII (haeIIR) from Haemophilus aegyptius.